The chain runs to 665 residues: DNA ligase (665 aa).

NAD(+)-binding positions include 32 to 36, 81 to 82, and Glu110; these read DSEYD and SL. The active-site N6-AMP-lysine intermediate is Lys112. Arg133, Glu167, Lys283, and Lys307 together coordinate NAD(+). Zn(2+) contacts are provided by Cys401, Cys404, Cys419, and Cys424. The BRCT domain occupies 586-665; the sequence is EGHPDFSGKT…AAFIEKQNGI (80 aa).

Belongs to the NAD-dependent DNA ligase family. LigA subfamily. Mg(2+) is required as a cofactor. Mn(2+) serves as cofactor.

It catalyses the reaction NAD(+) + (deoxyribonucleotide)n-3'-hydroxyl + 5'-phospho-(deoxyribonucleotide)m = (deoxyribonucleotide)n+m + AMP + beta-nicotinamide D-nucleotide.. Functionally, DNA ligase that catalyzes the formation of phosphodiester linkages between 5'-phosphoryl and 3'-hydroxyl groups in double-stranded DNA using NAD as a coenzyme and as the energy source for the reaction. It is essential for DNA replication and repair of damaged DNA. The polypeptide is DNA ligase (Staphylococcus epidermidis (strain ATCC 35984 / DSM 28319 / BCRC 17069 / CCUG 31568 / BM 3577 / RP62A)).